The chain runs to 371 residues: 4-hydroxy-3-methylbut-2-en-1-yl diphosphate synthase (flavodoxin) (371 aa).

[4Fe-4S] cluster contacts are provided by C269, C272, C304, and E311.

This sequence belongs to the IspG family. [4Fe-4S] cluster serves as cofactor.

It catalyses the reaction (2E)-4-hydroxy-3-methylbut-2-enyl diphosphate + oxidized [flavodoxin] + H2O + 2 H(+) = 2-C-methyl-D-erythritol 2,4-cyclic diphosphate + reduced [flavodoxin]. It participates in isoprenoid biosynthesis; isopentenyl diphosphate biosynthesis via DXP pathway; isopentenyl diphosphate from 1-deoxy-D-xylulose 5-phosphate: step 5/6. Functionally, converts 2C-methyl-D-erythritol 2,4-cyclodiphosphate (ME-2,4cPP) into 1-hydroxy-2-methyl-2-(E)-butenyl 4-diphosphate. The chain is 4-hydroxy-3-methylbut-2-en-1-yl diphosphate synthase (flavodoxin) from Acinetobacter baumannii (strain AB307-0294).